The following is a 200-amino-acid chain: ADP-ribose 1''-phosphate phosphatase (200 aa).

One can recognise a Macro domain in the interval 1-200 (MDPPSVRSKI…EVTVVRPHGG (200 aa)). Substrate contacts are provided by residues 15 to 17 (GDL), 29 to 31 (ACN), 36 to 41 (WGKGIA), and 169 to 175 (FNAGLFG).

It belongs to the POA1 family.

The catalysed reaction is ADP-alpha-D-ribose 1''-phosphate + H2O = ADP-D-ribose + phosphate. Its function is as follows. Highly specific phosphatase involved in the metabolism of ADP-ribose 1''-phosphate (Appr1p) which is produced as a consequence of tRNA splicing. This Aspergillus fumigatus (strain ATCC MYA-4609 / CBS 101355 / FGSC A1100 / Af293) (Neosartorya fumigata) protein is ADP-ribose 1''-phosphate phosphatase (poa1).